The chain runs to 75 residues: uncharacterized protein (75 aa).

The next 2 membrane-spanning stretches (helical) occupy residues 5–25 (VIIC…IFEI) and 42–62 (VAIF…GSVL).

It localises to the membrane. This is an uncharacterized protein from Saccharomyces cerevisiae (strain ATCC 204508 / S288c) (Baker's yeast).